The sequence spans 41 residues: Large ribosomal subunit protein bL36 (41 aa).

This sequence belongs to the bacterial ribosomal protein bL36 family.

The polypeptide is Large ribosomal subunit protein bL36 (Bradyrhizobium diazoefficiens (strain JCM 10833 / BCRC 13528 / IAM 13628 / NBRC 14792 / USDA 110)).